The primary structure comprises 217 residues: Somatotropin (217 aa).

The signal sequence occupies residues 1–26 (MATGSHTTTLLLAVALLGLPWPQEAG). Zn(2+) is bound at residue His-46. Residues Cys-79 and Cys-190 are joined by a disulfide bond. Glu-199 provides a ligand contact to Zn(2+). Cys-207 and Cys-215 are oxidised to a cystine.

This sequence belongs to the somatotropin/prolactin family.

The protein resides in the secreted. Its function is as follows. Plays an important role in growth control. Its major role in stimulating body growth is to stimulate the liver and other tissues to secrete IGF1. It stimulates both the differentiation and proliferation of myoblasts. It also stimulates amino acid uptake and protein synthesis in muscle and other tissues. The polypeptide is Somatotropin (GH1) (Galago senegalensis (Northern lesser bushbaby)).